Reading from the N-terminus, the 276-residue chain is F-actin-capping protein subunit beta (276 aa).

Belongs to the F-actin-capping protein beta subunit family. In terms of assembly, component of the F-actin capping complex, composed of a heterodimer of an alpha and a beta subunit. Subunit of dynactin, a multiprotein complex part of a tripartite complex with dynein and a adapter, such as BICDL1, BICD2 or HOOK3.

It localises to the cytoplasm. Its subcellular location is the cytoskeleton. Its function is as follows. F-actin-capping proteins bind in a Ca(2+)-independent manner to the fast growing ends of actin filaments (barbed end) thereby blocking the exchange of subunits at these ends. Unlike other capping proteins (such as gelsolin and severin), these proteins do not sever actin filaments. Forms, with CAPZB, the barbed end of the fast growing ends of actin filaments in the dynactin complex and stabilizes dynactin structure. The dynactin multiprotein complex activates the molecular motor dynein for ultra-processive transport along microtubules. In Drosophila melanogaster (Fruit fly), this protein is F-actin-capping protein subunit beta (cpb).